The sequence spans 60 residues: uncharacterized protein (60 aa).

This is an uncharacterized protein from Dictyostelium discoideum (Social amoeba).